Here is a 421-residue protein sequence, read N- to C-terminus: 4-aminobutyrate aminotransferase PuuE (421 aa).

Pyridoxal 5'-phosphate contacts are provided by residues 110–111 (GA) and 238–241 (DEVQ). Position 267 is an N6-(pyridoxal phosphate)lysine (Lys-267). Position 296 (Thr-296) interacts with pyridoxal 5'-phosphate.

The protein belongs to the class-III pyridoxal-phosphate-dependent aminotransferase family. The cofactor is pyridoxal 5'-phosphate.

It carries out the reaction 4-aminobutanoate + 2-oxoglutarate = succinate semialdehyde + L-glutamate. The protein operates within amine and polyamine degradation; putrescine degradation; succinate semialdehyde from 4-aminobutanoate. Its activity is regulated as follows. Completely inhibited by succinate and low-aeration conditions. Its function is as follows. Catalyzes the transfer of the amino group from gamma-aminobutyrate (GABA) to alpha-ketoglutarate (KG) to yield succinic semialdehyde (SSA). PuuE is important for utilization of putrescine as the sole nitrogen or carbon source. This is 4-aminobutyrate aminotransferase PuuE (puuE) from Escherichia coli (strain K12).